Consider the following 317-residue polypeptide: Methionyl-tRNA formyltransferase (317 aa).

Residue 110 to 113 participates in (6S)-5,6,7,8-tetrahydrofolate binding; the sequence is SLLP.

It belongs to the Fmt family.

It catalyses the reaction L-methionyl-tRNA(fMet) + (6R)-10-formyltetrahydrofolate = N-formyl-L-methionyl-tRNA(fMet) + (6S)-5,6,7,8-tetrahydrofolate + H(+). Attaches a formyl group to the free amino group of methionyl-tRNA(fMet). The formyl group appears to play a dual role in the initiator identity of N-formylmethionyl-tRNA by promoting its recognition by IF2 and preventing the misappropriation of this tRNA by the elongation apparatus. In Lactiplantibacillus plantarum (strain ATCC BAA-793 / NCIMB 8826 / WCFS1) (Lactobacillus plantarum), this protein is Methionyl-tRNA formyltransferase.